Reading from the N-terminus, the 427-residue chain is MTTVVLIGTQWGDEGKGKITDFLAEKADLVVRYQGGNNAGHTVVVGENSFKLHLIPSGILYPEKICVIGNGVVIDPKVLKEELEYLRQRGVTTANLKISLRAHLIMPYHKKLDELEEEDKGENKIGTTKRGIGPAYRDKAARTGIRVCDLLDKELFAEKLALNLKEKNNLLEKIYGVEGFSYDELYHEYLEYAEIIRPYATDTSRLINDAIESGQKVLFEGAQGTLLDLDHGTYPYVTSSHPVAGAACIGAGIGPTKIHEVIGVVKAYTTRVGSGPFPTELLDETGEFLRKQGYEFGTTTGRPRRCGWFDGVIARYAARVNGLSGLAVTKLDVLTGLKTIKIAVGYRFNGKVINEFPASLKELSQCEPVYEELPGWSEDITGARKLTDLPENARNYLRKIEEITGVPIKIISVGTRRDQTIILDQVF.

GTP is bound by residues 12–18 and 40–42; these read GDEGKGK and GHT. Asp13 serves as the catalytic Proton acceptor. Mg(2+) is bound by residues Asp13 and Gly40. IMP is bound by residues 13–16, 38–41, Thr128, Arg142, Gln223, Thr238, and Arg302; these read DEGK and NAGH. His41 (proton donor) is an active-site residue. 298–304 contacts substrate; sequence TTTGRPR. Residues Arg304, 330–332, and 412–414 contribute to the GTP site; these read KLD and SVG.

The protein belongs to the adenylosuccinate synthetase family. Homodimer. It depends on Mg(2+) as a cofactor.

It is found in the cytoplasm. It catalyses the reaction IMP + L-aspartate + GTP = N(6)-(1,2-dicarboxyethyl)-AMP + GDP + phosphate + 2 H(+). The protein operates within purine metabolism; AMP biosynthesis via de novo pathway; AMP from IMP: step 1/2. Functionally, plays an important role in the de novo pathway of purine nucleotide biosynthesis. Catalyzes the first committed step in the biosynthesis of AMP from IMP. This is Adenylosuccinate synthetase from Carboxydothermus hydrogenoformans (strain ATCC BAA-161 / DSM 6008 / Z-2901).